The sequence spans 321 residues: Type 3 secretion system translocon protein SctB (321 aa).

Residues 99-119 (AALIGGAISSVLGILGSFAAI) traverse the membrane as a helical segment.

This sequence belongs to the SctB/EspB family. The core secretion machinery of the T3SS is composed of approximately 20 different proteins, including cytoplasmic components, a base, an export apparatus and a needle. This subunit is involved in the formation of a pore, called the translocon, in host membrane.

It is found in the secreted. It localises to the cell surface. The protein localises to the host membrane. Its function is as follows. Component of the type III secretion system (T3SS), also called injectisome, which is used to inject bacterial effector proteins into eukaryotic host cells. EspD and EspB are inserted into the host membrane where they form a pore and allow the translocation of effector proteins into the cytosol of target cells. Necessary for intimate attachment to epithelial cells. The polypeptide is Type 3 secretion system translocon protein SctB (Escherichia coli O127:H6 (strain E2348/69 / EPEC)).